The sequence spans 511 residues: GMP synthase [glutamine-hydrolyzing] (511 aa).

The 191-residue stretch at 5 to 195 (AILVLDFGSQ…VFKICQAQIN (191 aa)) folds into the Glutamine amidotransferase type-1 domain. C82 serves as the catalytic Nucleophile. Active-site residues include H169 and E171. Residues 196 to 386 (WSLEGNLETI…LGIKKESLYR (191 aa)) form the GMPS ATP-PPase domain. 223–229 (SGGTDSL) is a binding site for ATP.

As to quaternary structure, homodimer.

It catalyses the reaction XMP + L-glutamine + ATP + H2O = GMP + L-glutamate + AMP + diphosphate + 2 H(+). It functions in the pathway purine metabolism; GMP biosynthesis; GMP from XMP (L-Gln route): step 1/1. Its function is as follows. Catalyzes the synthesis of GMP from XMP. The chain is GMP synthase [glutamine-hydrolyzing] (guaA) from Borreliella burgdorferi (strain N40) (Borrelia burgdorferi).